The chain runs to 372 residues: DNA replication and repair protein RecF (372 aa).

30–37 lines the ATP pocket; sequence GENAQGKT.

The protein belongs to the RecF family.

The protein localises to the cytoplasm. In terms of biological role, the RecF protein is involved in DNA metabolism; it is required for DNA replication and normal SOS inducibility. RecF binds preferentially to single-stranded, linear DNA. It also seems to bind ATP. This is DNA replication and repair protein RecF from Geobacillus kaustophilus (strain HTA426).